Reading from the N-terminus, the 239-residue chain is Ribosomal RNA small subunit methyltransferase G (239 aa).

S-adenosyl-L-methionine contacts are provided by residues glycine 77, phenylalanine 82, 128-129, and arginine 147; that span reads AE.

This sequence belongs to the methyltransferase superfamily. RNA methyltransferase RsmG family.

It localises to the cytoplasm. In terms of biological role, specifically methylates the N7 position of guanine in position 535 of 16S rRNA. The polypeptide is Ribosomal RNA small subunit methyltransferase G (Bacillus mycoides (strain KBAB4) (Bacillus weihenstephanensis)).